The primary structure comprises 454 residues: Putative KilA-N domain-containing protein L4 (454 aa).

The segment covering 1 to 12 (MPQKTSKSKSSR) has biased composition (basic residues). Residues 1–159 (MPQKTSKSKS…DVPEEEYDDN (159 aa)) form a disordered region. Over residues 14–64 (RYIEDSDDETRGRSRNRSIEKSRSRSLDKSQKKSRDKSLTRSRSKSPEKSK) the composition is skewed to basic and acidic residues. The segment covering 65-79 (SRSKSLTRSRSKSPK) has biased composition (basic residues). 2 stretches are compositionally biased toward acidic residues: residues 98 to 123 (YTTE…DEEL) and 130 to 158 (ESDE…EYDD). The KilA-N domain occupies 172–276 (EFARGKFGDF…LKVSDIVIEY (105 aa)).

The protein is Putative KilA-N domain-containing protein L4 of Acanthamoeba polyphaga mimivirus (APMV).